Consider the following 311-residue polypeptide: Malate dehydrogenase (311 aa).

NAD(+) is bound by residues 7 to 13 (GAAGGIG) and aspartate 34. Positions 81 and 87 each coordinate substrate. NAD(+) contacts are provided by residues asparagine 94 and 117 to 119 (ITN). Positions 119 and 153 each coordinate substrate. Histidine 177 functions as the Proton acceptor in the catalytic mechanism. An NAD(+)-binding site is contributed by methionine 227.

The protein belongs to the LDH/MDH superfamily. MDH type 1 family. As to quaternary structure, homodimer.

It carries out the reaction (S)-malate + NAD(+) = oxaloacetate + NADH + H(+). In terms of biological role, catalyzes the reversible oxidation of malate to oxaloacetate. The chain is Malate dehydrogenase from Aliivibrio fischeri (strain ATCC 700601 / ES114) (Vibrio fischeri).